The following is a 60-amino-acid chain: Large ribosomal subunit protein bL32 (60 aa).

Residues 1–23 form a disordered region; sequence MAVPRNRHSNARKNIRRSHHAKQ.

It belongs to the bacterial ribosomal protein bL32 family.

This Chlamydia abortus (strain DSM 27085 / S26/3) (Chlamydophila abortus) protein is Large ribosomal subunit protein bL32.